The sequence spans 269 residues: Cyclic AMP-dependent transcription factor ATF-1 (269 aa).

The interval 1–90 (MEDSHKSNTT…GEGENPSISA (90 aa)) is disordered. Over residues 9-18 (TTETASQPGS) the composition is skewed to polar residues. Residues 31–90 (QVSSLSESEESQDSSDSIGSSQKAHGILARRPSYRKILKDLSSEDTRGRKGEGENPSISA) form the KID domain. A Phosphoserine; by CaMK1, CDK3, RPS6KA4 and RPS6KA5 modification is found at serine 63. Residues 67–83 (ILKDLSSEDTRGRKGEG) show a composition bias toward basic and acidic residues. Serine 196 is subject to Phosphoserine; by HIPK2. Lysine 206 is covalently cross-linked (Glycyl lysine isopeptide (Lys-Gly) (interchain with G-Cter in SUMO2)). One can recognise a bZIP domain in the interval 211-269 (QLRREIRLMKNREAARECRRKKKEYVKCLENRVAVLENQNKTLIEELKTLKDLYSHKSV). A basic motif region spans residues 213 to 237 (RREIRLMKNREAARECRRKKKEYVK). The interval 239 to 260 (LENRVAVLENQNKTLIEELKTL) is leucine-zipper.

It belongs to the bZIP family. ATF subfamily. As to quaternary structure, binds DNA as a dimer. Interacts with HIPK2 and CDK3. Interacts with MOTS-c, a peptide produced by the mitochondrially encoded 12S rRNA MT-RNR1; the interaction occurs in the nucleus following metabolic stress. In terms of processing, phosphorylated at Ser-196 by HIPK2 in response to genotoxic stress. This phosphorylation promotes transcription repression of FTH1 and other antioxidant detoxification genes. The CDK3-mediated phosphorylation at Ser-63 promotes its transactivation and transcriptional activities. Phosphorylated at Ser-63 by RPS6KA4 and RPS6KA5 in response to mitogenic or stress stimuli.

The protein resides in the nucleus. Binds the cAMP response element (CRE) (consensus: 5'-GTGACGT[AC][AG]-3'), a sequence present in many viral and cellular promoters. Binds to the Tax-responsive element (TRE) of HTLV-I. Mediates PKA-induced stimulation of CRE-reporter genes. Represses the expression of FTH1 and other antioxidant detoxification genes. Triggers cell proliferation and transformation. The protein is Cyclic AMP-dependent transcription factor ATF-1 (Atf1) of Mus musculus (Mouse).